A 549-amino-acid chain; its full sequence is Sphingosine-1-phosphate transporter SPNS2 (549 aa).

Disordered regions lie at residues 14 to 36 and 78 to 97; these read AEEE…GAGG and PGCA…PASL. 11 helical membrane passes run 141 to 161, 169 to 189, 202 to 222, 229 to 249, 261 to 281, 320 to 340, 364 to 384, 398 to 418, 422 to 442, 466 to 486, and 507 to 527; these read GLLQ…FGYL, VILS…SFIP, LVGI…GDLF, LMLS…YITG, WALR…LILV, LATS…PLYL, LIFG…GAGA, LVCA…FVAA, IVGA…NWAI, TSHL…SDLI, and LCPF…LFFL.

It belongs to the major facilitator superfamily. Spinster (TC 2.A.1.49) family. Expression is high in the lungs and liver, low in the lymph nodes, spleen and bone marrow, and very low but detectable in the thymus. Not expressed in red blood cells. Also expressed in the inner ear: expressed in the cochlea, both in the lateral wall and organ of Corti.

It localises to the cell membrane. The protein localises to the endosome membrane. The enzyme catalyses sphing-4-enine 1-phosphate(in) = sphing-4-enine 1-phosphate(out). It catalyses the reaction sphinganine 1-phosphate(in) = sphinganine 1-phosphate(out). Lipid transporter that specifically mediates export of sphingosine-1-phosphate (sphing-4-enine 1-phosphate, S1P) and sphinganine-1-phosphate in the lymph, thereby playing a role in lymphocyte trafficking. S1P is a bioactive signaling molecule that regulates many physiological processes important for the development and for the immune system. Regulates levels of S1P and the S1P gradient that exists between the high circulating concentrations of S1P and low tissue levels that control lymphocyte trafficking. Required for the egress of T-cells from lymph nodes during an immune response by mediating S1P secretion, which generates a gradient that enables activated T-cells to access lymph. Also required for the egress of immature B-cells from the bone marrow. In contrast, it does not mediate S1P release from red blood cells. Involved in auditory function: S1P release in the inner ear is required for maintenance of the endocochlear potential in the cochlea. In addition to export, also able to mediate S1P import. This is Sphingosine-1-phosphate transporter SPNS2 from Mus musculus (Mouse).